Consider the following 489-residue polypeptide: Major aspartyl peptidase 1 (489 aa).

The N-terminal stretch at 1–16 (MHYLAVALPLLTLALA) is a signal peptide. One can recognise a Peptidase A1 domain in the interval 101-432 (YAGQVSIGTP…RYNPAAIGFA (332 aa)). The active site involves aspartate 119. Glycine 121 lines the pepstatin A pocket. A disulfide bridge connects residues cysteine 132 and cysteine 137. Pepstatin A is bound by residues threonine 161, glycine 163, and serine 164. N-linked (GlcNAc...) asparagine glycosylation is present at asparagine 266. Tyrosine 286 provides a ligand contact to pepstatin A. Residue aspartate 317 is part of the active site. Positions 320 and 321 each coordinate pepstatin A. Cysteine 357 and cysteine 391 are oxidised to a cystine. Positions 442–466 (AGNPSSSTTGGGTSGSNGGGSSSGA) are disordered. Gly residues predominate over residues 450–463 (TGGGTSGSNGGGSS). Positions 456-489 (GSNGGGSSSGAMERKGVQLGWLVGAVAVGVAAMI) are cleaved as a propeptide — removed at pH 5.0; by autocatalysis.

It belongs to the peptidase A1 family. In terms of assembly, monomer. In terms of processing, activated by the autocatalytic cleavage of the propeptide. Cleaved at the end of the propeptide promiscuously from residue 76 to residue 79. C-terminal cleavage by autocatalysis at Gly-456 at the pH optimum indicating a possible regulatory or other function of this propeptide.

The protein localises to the secreted. With respect to regulation, activated by low pH. Inhibited by pepstatin A with an IC(50) of 1.4 nM. Inhibited by acetyl pepstatin. Inhibited by HIV antiretroviral therapy protease inhibitors including amprenavir and ritonavir. Inhibited by HIV-1 protease inhibitor brecanavir with an approximate IC(50) of 352 nM. Inhibited by HIV-1 protease inhibitors CGP53437 and GS-8374. From the tested peptidomimetic inhibitor molecules, macrocycles containing P2-P3' tethered side chains, statines in P1 and an alpha amino acid in P2' are the best. From the linear peptidomimetic inhibitors, the ones with a phenylstatine or hydroxyethylamine scissile bond isoster are better than compounds with a reduced bond or a homo-amide. Overall, inhibitors with a phenylalanine side chain, either unsubstituted or with a small substituent, is preferred in P1 while a bulkier P1 side chain leads to lower inhibition. Its function is as follows. Possesses prevalent extracellular endopeptidase activity at low pH condition. Required for high-density growth in acidic environments. Broad substrate specificity with preference cleavage of the peptide substrate between hydrophobic amino acids. Cleaves substrate at P1-P1' between Phe-Leu. Positively charged amino acids are preferred at P2. Prefers hydrophobic amino acids at the P3 and P4 positions. Cleaves substrate also at P1'-P2' between Leu-Val to some degree. Required for virulence in mouse inhalation model of infection. The polypeptide is Major aspartyl peptidase 1 (Cryptococcus neoformans var. grubii serotype A (strain H99 / ATCC 208821 / CBS 10515 / FGSC 9487) (Filobasidiella neoformans var. grubii)).